Here is a 175-residue protein sequence, read N- to C-terminus: Shikimate kinase (175 aa).

11-16 lines the ATP pocket; the sequence is GAGKTT. Residue Thr-15 participates in Mg(2+) binding. Asp-33, Arg-57, and Gly-79 together coordinate substrate. Arg-118 contributes to the ATP binding site. Arg-140 is a substrate binding site.

This sequence belongs to the shikimate kinase family. As to quaternary structure, monomer. Mg(2+) serves as cofactor.

The protein localises to the cytoplasm. The enzyme catalyses shikimate + ATP = 3-phosphoshikimate + ADP + H(+). It functions in the pathway metabolic intermediate biosynthesis; chorismate biosynthesis; chorismate from D-erythrose 4-phosphate and phosphoenolpyruvate: step 5/7. Catalyzes the specific phosphorylation of the 3-hydroxyl group of shikimic acid using ATP as a cosubstrate. The chain is Shikimate kinase from Bacteroides thetaiotaomicron (strain ATCC 29148 / DSM 2079 / JCM 5827 / CCUG 10774 / NCTC 10582 / VPI-5482 / E50).